Reading from the N-terminus, the 396-residue chain is GTPase Obg (396 aa).

The Obg domain occupies 1 to 159; the sequence is MKFVDEASIY…RTLKLEMKVL (159 aa). A disordered region spans residues 120–146; the sequence is GGHHGLGNTRFKSSTNRAPRQTTKGTV. The span at 129-144 shows a compositional bias: polar residues; it reads RFKSSTNRAPRQTTKG. Residues 160–333 form the OBG-type G domain; sequence ADVGLLGLPN…LCLDLMTALD (174 aa). GTP-binding positions include 166–173, 191–195, 213–216, 283–286, and 314–316; these read GLPNAGKS, FTTLV, DIPG, NKTD, and SAI. Mg(2+)-binding residues include Ser-173 and Thr-193.

This sequence belongs to the TRAFAC class OBG-HflX-like GTPase superfamily. OBG GTPase family. As to quaternary structure, monomer. The cofactor is Mg(2+).

It localises to the cytoplasm. An essential GTPase which binds GTP, GDP and possibly (p)ppGpp with moderate affinity, with high nucleotide exchange rates and a fairly low GTP hydrolysis rate. Plays a role in control of the cell cycle, stress response, ribosome biogenesis and in those bacteria that undergo differentiation, in morphogenesis control. This is GTPase Obg from Marinomonas sp. (strain MWYL1).